The chain runs to 309 residues: Aromatic prenyltransferase (309 aa).

This sequence belongs to the aromatic prenyltransferase family.

Functionally, prenyltransferase that attaches isoprenoid moieties to carbon atoms of aromatic substrates in an enzyme-catalyzed Friedel-Crafts reaction. Shows specificity for dimethylallyl diphosphate (DMAPP) and does not accept geranyl diphosphate (GPP) or isopentenyl diphosphate (IPP). Prenylates the artificial substrate 2,7-dihydroxynaphthalene (2,7-DHN), as well as dihydrophenazine-1-carboxylic acid and 4-hydroxybenzoic acid at lower levels. Only traces of products are detected with aspulvinone E or flaviolin as substrates; and no product is formed with L-tryptophan, L-tyrosine, or 4-hydroxyphenylpyruvate. Ptf seems no to be involved in the prenylation reaction in the biosynthesis of aspulvinone H and J and the physiological function of ptf remains unknown. This chain is Aromatic prenyltransferase, found in Botryotinia fuckeliana (strain B05.10) (Noble rot fungus).